We begin with the raw amino-acid sequence, 262 residues long: Cyclin-dependent kinase inhibitor 1 (262 aa).

The tract at residues 140–212 (SDVAEAGSEH…SAQQATRPKI (73 aa)) is disordered. Basic and acidic residues predominate over residues 160-169 (SGRDRERRET). Positions 198–208 (SAATASAQQAT) are enriched in low complexity.

It belongs to the CDI family. ICK/KRP subfamily.

This is Cyclin-dependent kinase inhibitor 1 (KRP1) from Oryza sativa subsp. indica (Rice).